Here is a 507-residue protein sequence, read N- to C-terminus: ATP synthase subunit alpha (507 aa).

168-175 contacts ATP; sequence GDRQTGKT.

Belongs to the ATPase alpha/beta chains family. As to quaternary structure, F-type ATPases have 2 components, CF(1) - the catalytic core - and CF(0) - the membrane proton channel. CF(1) has five subunits: alpha(3), beta(3), gamma(1), delta(1), epsilon(1). CF(0) has three main subunits: a(1), b(2) and c(9-12). The alpha and beta chains form an alternating ring which encloses part of the gamma chain. CF(1) is attached to CF(0) by a central stalk formed by the gamma and epsilon chains, while a peripheral stalk is formed by the delta and b chains.

It is found in the cell membrane. The catalysed reaction is ATP + H2O + 4 H(+)(in) = ADP + phosphate + 5 H(+)(out). In terms of biological role, produces ATP from ADP in the presence of a proton gradient across the membrane. The alpha chain is a regulatory subunit. The polypeptide is ATP synthase subunit alpha (Mesomycoplasma hyopneumoniae (strain 7448) (Mycoplasma hyopneumoniae)).